Reading from the N-terminus, the 255-residue chain is Coenzyme F420:L-glutamate ligase (255 aa).

GTP-binding positions include 11 to 14, 40 to 41, and lysine 45; these read IPLI and ST. A divalent metal cation is bound at residue aspartate 109. Asparagine 112 lines the GTP pocket. Residues aspartate 150, threonine 151, and glutamate 208 each contribute to the a divalent metal cation site. Residue 206 to 213 coordinates GTP; sequence MGEGAGGT.

It belongs to the CofE family. Homodimer. It depends on Mg(2+) as a cofactor. Mn(2+) serves as cofactor. K(+) is required as a cofactor.

It catalyses the reaction oxidized coenzyme F420-0 + GTP + L-glutamate = oxidized coenzyme F420-1 + GDP + phosphate + H(+). It carries out the reaction oxidized coenzyme F420-1 + GTP + L-glutamate = oxidized coenzyme F420-2 + GDP + phosphate + H(+). It functions in the pathway cofactor biosynthesis; coenzyme F420 biosynthesis. Functionally, catalyzes the GTP-dependent successive addition of two or more gamma-linked L-glutamates to the L-lactyl phosphodiester of 7,8-didemethyl-8-hydroxy-5-deazariboflavin (F420-0) to form coenzyme F420-0-glutamyl-glutamate (F420-2) or polyglutamated F420 derivatives. This chain is Coenzyme F420:L-glutamate ligase, found in Methanosarcina barkeri (strain Fusaro / DSM 804).